The sequence spans 293 residues: Bifunctional protein FolD (293 aa).

Residues 164-166 (GRS), serine 193, and threonine 234 each bind NADP(+).

Belongs to the tetrahydrofolate dehydrogenase/cyclohydrolase family. In terms of assembly, homodimer.

It catalyses the reaction (6R)-5,10-methylene-5,6,7,8-tetrahydrofolate + NADP(+) = (6R)-5,10-methenyltetrahydrofolate + NADPH. It carries out the reaction (6R)-5,10-methenyltetrahydrofolate + H2O = (6R)-10-formyltetrahydrofolate + H(+). It functions in the pathway one-carbon metabolism; tetrahydrofolate interconversion. In terms of biological role, catalyzes the oxidation of 5,10-methylenetetrahydrofolate to 5,10-methenyltetrahydrofolate and then the hydrolysis of 5,10-methenyltetrahydrofolate to 10-formyltetrahydrofolate. This is Bifunctional protein FolD from Bacteroides thetaiotaomicron (strain ATCC 29148 / DSM 2079 / JCM 5827 / CCUG 10774 / NCTC 10582 / VPI-5482 / E50).